A 1941-amino-acid polypeptide reads, in one-letter code: WD repeat-containing protein 81 (1941 aa).

Residues 1–27 are disordered; the sequence is MAQGSGGREGALRTPAGGWHSPPSPDM. A necessary and sufficient for the interaction with SQSTM1 region spans residues 1-650; sequence MAQGSGGREG…TPCEASWTRD (650 aa). Positions 337–614 constitute a BEACH domain; the sequence is GQPTGQEELR…IPKLLVQTIQ (278 aa). Disordered regions lie at residues 618–637, 694–718, 1022–1074, 1097–1217, 1523–1556, and 1569–1602; these read GREDFTENPGQLPNGVGRPV, VASASRPGRRNKAAGADPGEGEEGR, SKDL…VSFH, PQEA…EGKE, PSSRNPASVEPTMPGTGPEWDPHGGGCPQDDGHS, and QIPNDSRPENPGPLGPISGVGGGGLGSGSDDNAL. A compositionally biased stretch (polar residues) spans 1137 to 1146; that stretch reads LRSGDSSQDL. Positions 1151–1174 are enriched in acidic residues; it reads GSEEEEEEEDSCVVLEEEEGEQEE. Gly residues predominate over residues 1586–1595; that stretch reads SGVGGGGLGS. WD repeat units follow at residues 1639-1677, 1686-1724, 1729-1769, 1777-1815, 1819-1856, 1860-1896, and 1902-1941; these read IRLQSFPGHSGAVKCVAPLSSEDFFLSGSKDRTVRLWPL, ETAPRLVYTQHRKSVFFVGQLEAPQHVVSCDGAVHVWDP, TLRT…FVDC, EFRLGGGLNPGLVRALAISPSGRSVVAGFSSGFMVLLDT, LVLRGWPAHEGDILQIKAVEGSVLVSSSSDHSLTVWKE, KPTHHYKSASDPIHTFDLYGSEVVTGTVSNKIGVCSL, and QATTKLSSENFRGTLTSLALLPTKRHLLLGSDNGVIRLLA.

It belongs to the WD repeat WDR81 family. In terms of assembly, interacts with WDR91; involved in early to late endosome cargo transport. Interacts with BECN1; negatively regulates the PI3 kinase/PI3K activity associated with endosomal membranes. Interacts with SQSTM1; the interaction is direct and regulates the interaction of SQSTM1 with ubiquitinated proteins. Interacts with MAP1LC3C; recruits MAP1LC3C to ubiquitinated protein aggregates in the aggrephagy process. In terms of tissue distribution, widely expressed. In the brain, highest levels in cerebellum and corpus callosum.

The protein resides in the early endosome membrane. It is found in the late endosome membrane. It localises to the lysosome membrane. The protein localises to the cytoplasmic vesicle. Its subcellular location is the autophagosome membrane. The protein resides in the mitochondrion. It is found in the cytoplasm. It localises to the cytosol. In terms of biological role, functions as a negative regulator of the PI3 kinase/PI3K activity associated with endosomal membranes via BECN1, a core subunit of the PI3K complex. By modifying the phosphatidylinositol 3-phosphate/PtdInsP3 content of endosomal membranes may regulate endosome fusion, recycling, sorting and early to late endosome transport. It is for instance, required for the delivery of cargos like BST2/tetherin from early to late endosome and thereby participates indirectly to their degradation by the lysosome. May also play a role in aggrephagy, the macroautophagic degradation of ubiquitinated protein aggregates. In this process, may regulate the interaction of SQSTM1 with ubiquitinated proteins and also recruit MAP1LC3C. May also be involved in maintenance of normal mitochondrial structure and organization. The chain is WD repeat-containing protein 81 from Homo sapiens (Human).